Reading from the N-terminus, the 266-residue chain is MPANYQSVPQDDPSVPNLAQAPPAYSEYNESATENPAVDQFKNTTPVAECAKSIRMAFLRKVYAILTAQLFVTSLFGGIFYLHPAFSFWVQMHPWFLILNFFISLVVLFGLIMKPYSYPRNYIFLFLFTALEGLTLGTAITFFSARIILEAVFITLGVFVALTAFTFQSKWDFSRLGGFLYVSLWSLILTPLIFFFVPSTPFIDMAFAGFGTLVFCGYILFDTYNILHRYSPEEFIMSSLMLYLDFINLFIRILQILGMLQNNDNN.

Residues 1 to 22 (MPANYQSVPQDDPSVPNLAQAP) are disordered. Transmembrane regions (helical) follow at residues 70 to 90 (LFVT…SFWV), 92 to 112 (MHPW…FGLI), 123 to 143 (IFLF…ITFF), 147 to 167 (IILE…AFTF), 177 to 197 (GGFL…FFFV), 201 to 221 (PFID…YILF), and 240 to 260 (LMLY…LGML).

The protein belongs to the BI1 family. LFG subfamily.

The protein resides in the endoplasmic reticulum membrane. It is found in the mitochondrion membrane. The protein localises to the golgi apparatus membrane. It localises to the vacuole membrane. Links the unfolded protein response and programmed cell death and mediates mitochondrial-dependent apoptosis. Induces cell death and disruption of the mitochondrial transmembrane potential. The protein is Bax inhibitor 1 (bxi1) of Schizosaccharomyces pombe (strain 972 / ATCC 24843) (Fission yeast).